A 202-amino-acid chain; its full sequence is Type II restriction enzyme MunI (202 aa).

Homodimer.

The catalysed reaction is Endonucleolytic cleavage of DNA to give specific double-stranded fragments with terminal 5'-phosphates.. Functionally, a P subtype restriction enzyme that recognizes the double-stranded sequence 5'-CAATTG-3' and cleaves after C-1. This chain is Type II restriction enzyme MunI, found in Mycoplasma sp.